The following is a 1350-amino-acid chain: Nidogen (1350 aa).

The N-terminal stretch at Met1–Gly22 is a signal peptide. One can recognise an NIDO domain in the interval Ala107 to Ile260. Residue Asn231 is glycosylated (N-linked (GlcNAc...) asparagine). Residues Leu281–Leu321 enclose the EGF-like 1 domain. Intrachain disulfides connect Cys285-Cys298, Cys292-Cys307, and Cys309-Cys320. The Nidogen G2 beta-barrel domain occupies Gln325–Asn550. Residues Asn423 and Asn480 are each glycosylated (N-linked (GlcNAc...) asparagine). Residues Glu545 to Glu583 enclose the EGF-like 2 domain. Cystine bridges form between Cys549–Cys562, Cys556–Cys571, Cys595–Cys608, Cys602–Cys617, and Cys619–Cys630. One can recognise an EGF-like 3; calcium-binding domain in the interval Asp591–Leu631. Residue Asn633 is glycosylated (N-linked (GlcNAc...) asparagine). The segment at Val645 to Ile691 is disordered. 5 EGF-like domains span residues Asp788 to Asp829, Ser832 to Gln874, Pro912 to Thr953, Lys955 to Ile996, and Glu997 to Gln1037. Cystine bridges form between Cys792-Cys804, Cys798-Cys815, Cys817-Cys828, Cys836-Cys849, Cys843-Cys860, Cys862-Cys873, Cys916-Cys927, Cys921-Cys938, Cys940-Cys952, Cys959-Cys971, Cys965-Cys982, Cys984-Cys995, Cys1001-Cys1014, Cys1008-Cys1023, and Cys1025-Cys1036. Asn801 is a glycosylation site (N-linked (GlcNAc...) asparagine). The N-linked (GlcNAc...) asparagine glycan is linked to Asn1032. LDL-receptor class B repeat units follow at residues Gly1084–Ser1126, Arg1127–Arg1170, Glu1171–Ser1216, and Asp1257–Ile1282.

Expressed in the basement membrane around the follicular epithelium of the adult ovary (at protein level).

It is found in the secreted. Its subcellular location is the extracellular space. The protein resides in the extracellular matrix. It localises to the basement membrane. Cell adhesion glycoprotein which is widely distributed in basement membranes. Involved in cell-extracellular matrix (ECM) interactions probably by connecting the laminin and collagen IV networks. Required for permeability and mechanical stability of basement membranes, and ECM dependent neural plasticity. Not involved in assembly of the embryonic basement membrane. In Drosophila melanogaster (Fruit fly), this protein is Nidogen.